A 243-amino-acid chain; its full sequence is MLCPPDVAFEKRHFKRRDGNKVVPPSIALVAGLESGFLFKLSAVEDVARRGQFPGLLTEDGFLLMCEESEHIRDAYAMAKHLVALAPDGIFTRATLQEAAGKVGSTQDTLSVEEVDALFNALDSDNRGYVSVDEFMDALYGEEGREAMREIRREYMRRKIEVEGEPSWRMRPTPKPTRKLRQKRKREQGQKRKQGQRQKQEQGQRQKREQGQRQKQEQGQKRKRERGGAQRPPPPKQKAGCGC.

An EF-hand domain is found at 110–145 (LSVEEVDALFNALDSDNRGYVSVDEFMDALYGEEGR). Residues 166–243 (PSWRMRPTPK…PPKQKAGCGC (78 aa)) are disordered. A compositionally biased stretch (basic residues) spans 176–196 (PTRKLRQKRKREQGQKRKQGQ). Repeat copies occupy residues 181 to 188 (RQKRKREQ), 189 to 196 (GQKRKQGQ), 197 to 204 (RQKQEQGQ), 205 to 212 (RQKREQGQ), 213 to 220 (RQKQEQGQ), and 221 to 228 (KRKRERGG). A 6 X 8 AA tandem repeats region spans residues 181–228 (RQKRKREQGQKRKQGQRQKQEQGQRQKREQGQRQKQEQGQKRKRERGG). Residues 198-220 (QKQEQGQRQKREQGQRQKQEQGQ) are compositionally biased toward basic and acidic residues.

The protein resides in the cytoplasm. The protein localises to the cytoskeleton. Microtubule-associated protein that may be involved in cross-linking microtubules. The polypeptide is I/6 autoantigen (Trypanosoma brucei brucei).